A 532-amino-acid polypeptide reads, in one-letter code: CTP synthase (532 aa).

The amidoligase domain stretch occupies residues 1–267 (MTKYIFVTGG…DDIVLEHLQL (267 aa)). A CTP-binding site is contributed by Ser-13. Ser-13 serves as a coordination point for UTP. 14-19 (SIGKGI) contributes to the ATP binding site. Position 54 (Tyr-54) interacts with L-glutamine. Position 71 (Asp-71) interacts with ATP. The Mg(2+) site is built by Asp-71 and Glu-141. Residues 148–150 (DIE), 188–193 (KTKPTQ), and Lys-224 contribute to the CTP site. Residues 188-193 (KTKPTQ) and Lys-224 contribute to the UTP site. Residues 292–532 (RIGLVGKYVS…DFVGAALKNK (241 aa)) form the Glutamine amidotransferase type-1 domain. Gly-354 contacts L-glutamine. Cys-381 acts as the Nucleophile; for glutamine hydrolysis in catalysis. L-glutamine is bound by residues 382–385 (LGMQ), Glu-405, and Arg-462. Catalysis depends on residues His-507 and Glu-509.

Belongs to the CTP synthase family. As to quaternary structure, homotetramer.

The catalysed reaction is UTP + L-glutamine + ATP + H2O = CTP + L-glutamate + ADP + phosphate + 2 H(+). It catalyses the reaction L-glutamine + H2O = L-glutamate + NH4(+). The enzyme catalyses UTP + NH4(+) + ATP = CTP + ADP + phosphate + 2 H(+). The protein operates within pyrimidine metabolism; CTP biosynthesis via de novo pathway; CTP from UDP: step 2/2. With respect to regulation, allosterically activated by GTP, when glutamine is the substrate; GTP has no effect on the reaction when ammonia is the substrate. The allosteric effector GTP functions by stabilizing the protein conformation that binds the tetrahedral intermediate(s) formed during glutamine hydrolysis. Inhibited by the product CTP, via allosteric rather than competitive inhibition. Catalyzes the ATP-dependent amination of UTP to CTP with either L-glutamine or ammonia as the source of nitrogen. Regulates intracellular CTP levels through interactions with the four ribonucleotide triphosphates. The sequence is that of CTP synthase from Listeria monocytogenes serovar 1/2a (strain ATCC BAA-679 / EGD-e).